Here is a 153-residue protein sequence, read N- to C-terminus: Large ribosomal subunit protein uL15 (153 aa).

Positions 1–48 are disordered; that stretch reads MRLNELSPAPGSKKDRKRVGRGDAGRGNYSGRGMKGQKARSGGATRPG.

It belongs to the universal ribosomal protein uL15 family. Part of the 50S ribosomal subunit.

Binds to the 23S rRNA. This is Large ribosomal subunit protein uL15 from Dehalococcoides mccartyi (strain ATCC BAA-2266 / KCTC 15142 / 195) (Dehalococcoides ethenogenes (strain 195)).